The following is a 464-amino-acid chain: 3-isopropylmalate dehydratase large subunit (464 aa).

[4Fe-4S] cluster is bound by residues Cys-345, Cys-405, and Cys-408.

This sequence belongs to the aconitase/IPM isomerase family. LeuC type 1 subfamily. Heterodimer of LeuC and LeuD. [4Fe-4S] cluster is required as a cofactor.

It carries out the reaction (2R,3S)-3-isopropylmalate = (2S)-2-isopropylmalate. It functions in the pathway amino-acid biosynthesis; L-leucine biosynthesis; L-leucine from 3-methyl-2-oxobutanoate: step 2/4. Its function is as follows. Catalyzes the isomerization between 2-isopropylmalate and 3-isopropylmalate, via the formation of 2-isopropylmaleate. This Bacteroides fragilis (strain ATCC 25285 / DSM 2151 / CCUG 4856 / JCM 11019 / LMG 10263 / NCTC 9343 / Onslow / VPI 2553 / EN-2) protein is 3-isopropylmalate dehydratase large subunit.